We begin with the raw amino-acid sequence, 486 residues long: Ribulose bisphosphate carboxylase large chain (486 aa).

Residues 1–2 (MS) constitute a propeptide that is removed on maturation. Substrate-binding residues include asparagine 123 and threonine 173. Lysine 175 (proton acceptor) is an active-site residue. Lysine 177 is a substrate binding site. Positions 201, 203, and 204 each coordinate Mg(2+). Lysine 201 carries the N6-carboxylysine modification. Serine 208 is modified (phosphoserine). The Proton acceptor role is filled by histidine 294. Residues arginine 295 and histidine 327 each contribute to the substrate site. Threonine 330 is subject to Phosphothreonine. Serine 379 is a substrate binding site.

It belongs to the RuBisCO large chain family. Type I subfamily. In terms of assembly, heterohexadecamer of 8 large chains and 8 small chains; disulfide-linked. The disulfide link is formed within the large subunit homodimers. It depends on Mg(2+) as a cofactor. Post-translationally, the disulfide bond which can form in the large chain dimeric partners within the hexadecamer appears to be associated with oxidative stress and protein turnover.

The protein resides in the plastid. It localises to the chloroplast. The enzyme catalyses 2 (2R)-3-phosphoglycerate + 2 H(+) = D-ribulose 1,5-bisphosphate + CO2 + H2O. The catalysed reaction is D-ribulose 1,5-bisphosphate + O2 = 2-phosphoglycolate + (2R)-3-phosphoglycerate + 2 H(+). Functionally, ruBisCO catalyzes two reactions: the carboxylation of D-ribulose 1,5-bisphosphate, the primary event in carbon dioxide fixation, as well as the oxidative fragmentation of the pentose substrate in the photorespiration process. Both reactions occur simultaneously and in competition at the same active site. The polypeptide is Ribulose bisphosphate carboxylase large chain (Aethionema grandiflorum (Persian stone-cress)).